The following is a 314-amino-acid chain: Transcription factor DICHOTOMA (314 aa).

Residues 87-145 (KKDRHSKINRPQGPRDRRVRLSIGIARKFFDLQEMLGFDKPSKTLDWLLTKSKEAIKEL) enclose the TCP domain. The 18-residue stretch at 201–218 (KESRAKARARARERTKEK) folds into the R domain.

The protein resides in the nucleus. Functionally, transcription regulator involved in the dorsovental asymmetry of flowers. Promotes dorsal identity. This Antirrhinum majus (Garden snapdragon) protein is Transcription factor DICHOTOMA (DICH).